The primary structure comprises 301 residues: Sulfate adenylyltransferase subunit 2 (301 aa).

This sequence belongs to the PAPS reductase family. CysD subfamily. As to quaternary structure, heterodimer composed of CysD, the smaller subunit, and CysN.

The catalysed reaction is sulfate + ATP + H(+) = adenosine 5'-phosphosulfate + diphosphate. The protein operates within sulfur metabolism; hydrogen sulfide biosynthesis; sulfite from sulfate: step 1/3. Functionally, with CysN forms the ATP sulfurylase (ATPS) that catalyzes the adenylation of sulfate producing adenosine 5'-phosphosulfate (APS) and diphosphate, the first enzymatic step in sulfur assimilation pathway. APS synthesis involves the formation of a high-energy phosphoric-sulfuric acid anhydride bond driven by GTP hydrolysis by CysN coupled to ATP hydrolysis by CysD. The polypeptide is Sulfate adenylyltransferase subunit 2 (Shewanella loihica (strain ATCC BAA-1088 / PV-4)).